The chain runs to 135 residues: Putative pre-16S rRNA nuclease (135 aa).

This sequence belongs to the YqgF nuclease family.

It localises to the cytoplasm. Its function is as follows. Could be a nuclease involved in processing of the 5'-end of pre-16S rRNA. The protein is Putative pre-16S rRNA nuclease of Christiangramia forsetii (strain DSM 17595 / CGMCC 1.15422 / KT0803) (Gramella forsetii).